A 448-amino-acid chain; its full sequence is Tubulin beta-2 chain (448 aa).

Residues Q11, E69, S138, G142, T143, G144, N204, and N226 each coordinate GTP. E69 is a Mg(2+) binding site. The disordered stretch occupies residues 421-448 (EYQQYQDATADEDGEYEDELDGQEEEDM). Positions 429 to 448 (TADEDGEYEDELDGQEEEDM) are enriched in acidic residues.

Belongs to the tubulin family. Dimer of alpha and beta chains. A typical microtubule is a hollow water-filled tube with an outer diameter of 25 nm and an inner diameter of 15 nM. Alpha-beta heterodimers associate head-to-tail to form protofilaments running lengthwise along the microtubule wall with the beta-tubulin subunit facing the microtubule plus end conferring a structural polarity. Microtubules usually have 13 protofilaments but different protofilament numbers can be found in some organisms and specialized cells. It depends on Mg(2+) as a cofactor.

Its subcellular location is the cytoplasm. The protein localises to the cytoskeleton. Tubulin is the major constituent of microtubules, a cylinder consisting of laterally associated linear protofilaments composed of alpha- and beta-tubulin heterodimers. Microtubules grow by the addition of GTP-tubulin dimers to the microtubule end, where a stabilizing cap forms. Below the cap, tubulin dimers are in GDP-bound state, owing to GTPase activity of alpha-tubulin. The chain is Tubulin beta-2 chain (TUBB2) from Eleusine indica (Goosegrass).